A 90-amino-acid chain; its full sequence is Elongation factor 1-beta (90 aa).

This sequence belongs to the EF-1-beta/EF-1-delta family.

Functionally, promotes the exchange of GDP for GTP in EF-1-alpha/GDP, thus allowing the regeneration of EF-1-alpha/GTP that could then be used to form the ternary complex EF-1-alpha/GTP/AAtRNA. The sequence is that of Elongation factor 1-beta from Sulfolobus acidocaldarius (strain ATCC 33909 / DSM 639 / JCM 8929 / NBRC 15157 / NCIMB 11770).